The chain runs to 3902 residues: Hybrid PKS-NRPS synthetase pynA (3902 aa).

The tract at residues 1 to 25 is disordered; sequence MDTPLSSSEISPRFSNTVPSSVSSM. In terms of domain architecture, Ketosynthase family 3 (KS3) spans 29 to 441; it reads ADPSVIVGLA…GTNAHVILDA (413 aa). Catalysis depends on for beta-ketoacyl synthase activity residues Cys201, His324, and His362. Residues 555–868 form a malonyl-CoA:ACP transacylase (MAT) domain region; sequence VFTGQGAQWF…PYLASLTRGV (314 aa). Ser647 serves as the catalytic For malonyltransferase activity. Residues 945-1080 are N-terminal hotdog fold; it reads HSILGARMPG…GLVSVETNAL (136 aa). The tract at residues 945 to 1256 is dehydratase (DH) domain; sequence HSILGARMPG…LEVTALGSDK (312 aa). Residues 945–1258 form the PKS/mFAS DH domain; that stretch reads HSILGARMPG…VTALGSDKTD (314 aa). Residue His977 is the Proton acceptor; for dehydratase activity of the active site. A C-terminal hotdog fold region spans residues 1100-1258; that stretch reads QESIPAETLY…VTALGSDKTD (159 aa). The active-site Proton donor; for dehydratase activity is the Asp1164. The tract at residues 1629–1945 is enoyl reductase (ER) domain; sequence GLLETLVFED…MGKHTGKVVL (317 aa). The ketoreductase (KR) domain stretch occupies residues 1971 to 2143; sequence TYLLVGGLGG…AGTTMNCGMI (173 aa). The 78-residue stretch at 2251–2328 folds into the Carrier 1 domain; that stretch reads ERTTLVLSAF…ALVTKASGLI (78 aa). Ser2288 bears the O-(pantetheine 4'-phosphoryl)serine mark. Residues 2337–2350 show a composition bias toward basic and acidic residues; it reads KAENVDNEGAKGNE. Positions 2337–2364 are disordered; it reads KAENVDNEGAKGNEDQEVETQQGQLNQP. A condensation (C) domain 7 region spans residues 2374–2816; sequence VPMSSFQQRL…AEVNLCGALE (443 aa). An adenylation (A) domain 8 region spans residues 2836–3248; the sequence is SVGVCQRIME…NGLLTFKGRI (413 aa). A Carrier 2 domain is found at 3391-3467; it reads GDDAEILQGV…AIAGMIQKQL (77 aa). Ser3427 bears the O-(pantetheine 4'-phosphoryl)serine mark. Positions 3515–3774 are thioesterase (TE) domain; that stretch reads LTGIDTFIGL…VDFLPVDALT (260 aa).

This sequence in the C-terminal section; belongs to the NRP synthetase family.

The protein operates within secondary metabolite biosynthesis. In terms of biological role, hybrid PKS-NRPS synthetase; part of the gene cluster that mediates the biosynthesis of pyranonigrins, a family of antioxidative compounds. The first step of pyranonigrins biosynthesis is performed by the hybrid PKS-NRPS synthetase that condenses 6 malonyl-CoA units to an acetyl starter unit, to form a 1,3,5-trioxotetradecane-6,8-dienyl-ACP. The enoyl reductase (ER) domain of pynA is likely to be functional during the first two rounds of polyketide chain extension, to generate the saturated C-C bonds of the alkyl side chain. PynA subsequently forms the amide bond between the acyl chain and L-serine. Although pynA has a terminal reductase domain, it appears to require the thioesterase pynI for the release of the straight-chain intermediate from pynA via the formation of a tetramic acid pyranonigrin J. The methyltransferase pynC then coverts pyranonigrin J to pyranonigrin I via N-methylation. The FAD-dependent monooxygenase pynG catalyzes an epoxidation-mediated cyclization to form the dihydro-gamma-pyrone moiety, followed by pynD-catalyzed oxidation of the alcohol to the ketone and enolization to yield the characteristic tetramic acid-fused gamma-pyrone core of pyranonigrin H. Pyranonigrin H is substrate of pynH for dehydration-mediated exo-methylene formation from the serine side chain to produce pyranonigrin E, before the oxidase pynE reduces the exo-methylene of pyranonigrin E into a pendant methyl to form pyranonigrin G. The FAD-linked oxidoreductase pynB performs the reverse reaction and converts pyranonigrin G back to pyranonigrin E. This is Hybrid PKS-NRPS synthetase pynA from Aspergillus niger (strain ATCC MYA-4892 / CBS 513.88 / FGSC A1513).